A 347-amino-acid polypeptide reads, in one-letter code: Quinolinate synthase (347 aa).

2 residues coordinate iminosuccinate: H47 and S68. C113 contributes to the [4Fe-4S] cluster binding site. Residues 139–141 and S156 each bind iminosuccinate; that span reads YAN. C200 lines the [4Fe-4S] cluster pocket. Residues 226-228 and T243 contribute to the iminosuccinate site; that span reads HPE. Residue C297 participates in [4Fe-4S] cluster binding.

It belongs to the quinolinate synthase family. Type 1 subfamily. The cofactor is [4Fe-4S] cluster.

The protein localises to the cytoplasm. The catalysed reaction is iminosuccinate + dihydroxyacetone phosphate = quinolinate + phosphate + 2 H2O + H(+). It functions in the pathway cofactor biosynthesis; NAD(+) biosynthesis; quinolinate from iminoaspartate: step 1/1. In terms of biological role, catalyzes the condensation of iminoaspartate with dihydroxyacetone phosphate to form quinolinate. In Salmonella typhi, this protein is Quinolinate synthase.